Reading from the N-terminus, the 477-residue chain is MSPQTETKASVGFKAGVKDYKLTYYTPEYETKDTDILAAFRVSPQPGVPPEEAGAAVAAESSTGTWTTVWTDGLTSLDRYKGRCYHIEPVAGEDSQWICYVAYPLDLFEEGSVTNMFTSIVGNVFGFKALRALRLEDLRIPPAYTKTFQGPPHGIQVERDKLNKYGRPLLGCTIKPKLGLSAKNYGRACYECLRGGLDFTKDDENVNSQPFMRWRDRFVFCAEAIYKAQAETGEIKGHYLNATAGTCEEMIKRAVFARELGVPIVMHDYITGGFTANTSLAHYCRDNGLLLHIHRAMHAVIDRQKNHGMHFRVLAKALRMSGGDHIHAGTVVGKLEGEREMTLGFVDLLRDDFIEKDRARGIFFTQDWVSMPGVIPVASGGIHVWHMPALTEIFGDDSVLQFGGGTLGHPWGNAPGAAANRVALEACVQARNEGRDLAREGNEIIRAACKWSPELAAACEVWKAIKFEFEPVDTIDK.

Positions 1-2 (MS) are excised as a propeptide. P3 bears the N-acetylproline mark. K14 is modified (N6,N6,N6-trimethyllysine). Positions 123 and 173 each coordinate substrate. Residue K175 is the Proton acceptor of the active site. K177 contacts substrate. K201, D203, and E204 together coordinate Mg(2+). K201 carries the N6-carboxylysine modification. H294 acts as the Proton acceptor in catalysis. The substrate site is built by R295, H327, and S379.

The protein belongs to the RuBisCO large chain family. Type I subfamily. In terms of assembly, heterohexadecamer of 8 large chains and 8 small chains; disulfide-linked. The disulfide link is formed within the large subunit homodimers. Mg(2+) serves as cofactor. In terms of processing, the disulfide bond which can form in the large chain dimeric partners within the hexadecamer appears to be associated with oxidative stress and protein turnover.

It localises to the plastid. The protein resides in the chloroplast. It carries out the reaction 2 (2R)-3-phosphoglycerate + 2 H(+) = D-ribulose 1,5-bisphosphate + CO2 + H2O. The catalysed reaction is D-ribulose 1,5-bisphosphate + O2 = 2-phosphoglycolate + (2R)-3-phosphoglycerate + 2 H(+). In terms of biological role, ruBisCO catalyzes two reactions: the carboxylation of D-ribulose 1,5-bisphosphate, the primary event in carbon dioxide fixation, as well as the oxidative fragmentation of the pentose substrate in the photorespiration process. Both reactions occur simultaneously and in competition at the same active site. This chain is Ribulose bisphosphate carboxylase large chain, found in Agrostis stolonifera (Creeping bentgrass).